The primary structure comprises 201 residues: Protein TV1384 (201 aa).

The 190-residue stretch at 11-200 (DIGAKAVMLA…EIEPNGKVEQ (190 aa)) folds into the AMMECR1 domain.

This is Protein TV1384 from Thermoplasma volcanium (strain ATCC 51530 / DSM 4299 / JCM 9571 / NBRC 15438 / GSS1).